The primary structure comprises 40 residues: Dermonecrotic toxin LgSicTox-alphaI-1 (40 aa).

The Mg(2+) site is built by E32 and D34.

This sequence belongs to the arthropod phospholipase D family. Class II subfamily. Requires Mg(2+) as cofactor. Contains 2 disulfide bonds. In terms of tissue distribution, expressed by the venom gland.

It localises to the secreted. The enzyme catalyses an N-(acyl)-sphingosylphosphocholine = an N-(acyl)-sphingosyl-1,3-cyclic phosphate + choline. It catalyses the reaction an N-(acyl)-sphingosylphosphoethanolamine = an N-(acyl)-sphingosyl-1,3-cyclic phosphate + ethanolamine. It carries out the reaction a 1-acyl-sn-glycero-3-phosphocholine = a 1-acyl-sn-glycero-2,3-cyclic phosphate + choline. The catalysed reaction is a 1-acyl-sn-glycero-3-phosphoethanolamine = a 1-acyl-sn-glycero-2,3-cyclic phosphate + ethanolamine. Its function is as follows. Dermonecrotic toxins cleave the phosphodiester linkage between the phosphate and headgroup of certain phospholipids (sphingolipid and lysolipid substrates), forming an alcohol (often choline) and a cyclic phosphate. This toxin acts on sphingomyelin (SM). It may also act on ceramide phosphoethanolamine (CPE), lysophosphatidylcholine (LPC) and lysophosphatidylethanolamine (LPE), but not on lysophosphatidylserine (LPS), and lysophosphatidylglycerol (LPG). It acts by transphosphatidylation, releasing exclusively cyclic phosphate products as second products. In vivo, intradermal injection induces dermonecrosis. Induces, hemolysis, vascular permeability, edema, inflammatory response, and platelet aggregation. The sequence is that of Dermonecrotic toxin LgSicTox-alphaI-1 from Loxosceles gaucho (Spider).